The following is a 755-amino-acid chain: Polyribonucleotide nucleotidyltransferase (755 aa).

Aspartate 493 and aspartate 499 together coordinate Mg(2+). The KH domain maps to 560–619 (PRIMTIQIPVDKIGALIGPGGKTIRNICETTGAQIDIEDDGRVFITTPDGAAARQAISMI). The S1 motif domain maps to 629–698 (GDIFLGKVVS…TTGKISLSRR (70 aa)). A disordered region spans residues 699–755 (AVLTGETPEERKAAGAAPRPRPREEQRGGRDEPRSLRDELRGPRREGDRPRPRRRDD). Basic and acidic residues predominate over residues 719–755 (RPREEQRGGRDEPRSLRDELRGPRREGDRPRPRRRDD).

Belongs to the polyribonucleotide nucleotidyltransferase family. The cofactor is Mg(2+).

The protein localises to the cytoplasm. It catalyses the reaction RNA(n+1) + phosphate = RNA(n) + a ribonucleoside 5'-diphosphate. In terms of biological role, involved in mRNA degradation. Catalyzes the phosphorolysis of single-stranded polyribonucleotides processively in the 3'- to 5'-direction. The polypeptide is Polyribonucleotide nucleotidyltransferase (Chloroflexus aurantiacus (strain ATCC 29366 / DSM 635 / J-10-fl)).